Here is a 332-residue protein sequence, read N- to C-terminus: MADRSRIRGFLREEHVTYASILLYITLSSGQIFFNKWVLSSKEINFPYPLGLTLLHMTFSSVLCFLLTKVFKVMKVEEGMTLEIYVTSVIPIGAMFAMTLWLGNTAYLYITVAFSQMLKAIMPVAVFILGVCVGLEIMSCKMLLIMSVISFGVLVSSYGELNINWVGVVYQMGGIVSEALRLILMEILVKRKGIKLNPLSLMYYMSPCSAICLFIPWIFLEKSKMDTWNFHVLVLSLNSLCTFALNLSVFLVISRTSALTIRIAGVVKDWLVVLVSALLFAETKLTIINLFGYAVAIVGVATYNNHKPKNGESITLVSQSPKNSDKKPDGPL.

A run of 10 helical transmembrane segments spans residues 19–39 (ASILLYITLSSGQIFFNKWVL), 46–66 (FPYPLGLTLLHMTFSSVLCFL), 82–102 (LEIYVTSVIPIGAMFAMTLWL), 120–140 (AIMPVAVFILGVCVGLEIMSC), 143–163 (LLIMSVISFGVLVSSYGELNI), 165–185 (WVGVVYQMGGIVSEALRLILM), 199–219 (LSLMYYMSPCSAICLFIPWIF), 233–253 (LVLSLNSLCTFALNLSVFLVI), 259–281 (LTIRIAGVVKDWLVVLVSALLFA), and 285–304 (LTIINLFGYAVAIVGVATYN). Over residues 312–322 (ESITLVSQSPK) the composition is skewed to polar residues. Residues 312–332 (ESITLVSQSPKNSDKKPDGPL) are disordered. Basic and acidic residues predominate over residues 323–332 (NSDKKPDGPL).

Belongs to the TPT transporter family. TPT (TC 2.A.7.9) subfamily.

Its subcellular location is the membrane. This Arabidopsis thaliana (Mouse-ear cress) protein is Probable sugar phosphate/phosphate translocator At1g53660.